The sequence spans 117 residues: Large ribosomal subunit protein uL18 (117 aa).

It belongs to the universal ribosomal protein uL18 family. Part of the 50S ribosomal subunit; part of the 5S rRNA/L5/L18/L25 subcomplex. Contacts the 5S and 23S rRNAs.

Its function is as follows. This is one of the proteins that bind and probably mediate the attachment of the 5S RNA into the large ribosomal subunit, where it forms part of the central protuberance. In Buchnera aphidicola subsp. Acyrthosiphon kondoi (Acyrthosiphon kondoi symbiotic bacterium), this protein is Large ribosomal subunit protein uL18.